A 116-amino-acid chain; its full sequence is Putative gamma-glutamylcyclotransferase PH0828 (116 aa).

13–16 (YGTL) contacts substrate. Glu-76 serves as the catalytic Proton acceptor.

The protein belongs to the gamma-glutamylcyclotransferase family.

In terms of biological role, putative gamma-glutamylcyclotransferase. This Pyrococcus horikoshii (strain ATCC 700860 / DSM 12428 / JCM 9974 / NBRC 100139 / OT-3) protein is Putative gamma-glutamylcyclotransferase PH0828.